The primary structure comprises 102 residues: Small ribosomal subunit protein bS6 (102 aa).

The protein belongs to the bacterial ribosomal protein bS6 family.

Binds together with bS18 to 16S ribosomal RNA. The chain is Small ribosomal subunit protein bS6 from Deinococcus deserti (strain DSM 17065 / CIP 109153 / LMG 22923 / VCD115).